The primary structure comprises 288 residues: 4-diphosphocytidyl-2-C-methyl-D-erythritol kinase (288 aa).

Lysine 8 is an active-site residue. 92 to 102 is a binding site for ATP; sequence PVAAGMAGGST. The active site involves aspartate 134.

Belongs to the GHMP kinase family. IspE subfamily.

It carries out the reaction 4-CDP-2-C-methyl-D-erythritol + ATP = 4-CDP-2-C-methyl-D-erythritol 2-phosphate + ADP + H(+). Its pathway is isoprenoid biosynthesis; isopentenyl diphosphate biosynthesis via DXP pathway; isopentenyl diphosphate from 1-deoxy-D-xylulose 5-phosphate: step 3/6. Its function is as follows. Catalyzes the phosphorylation of the position 2 hydroxy group of 4-diphosphocytidyl-2C-methyl-D-erythritol. This chain is 4-diphosphocytidyl-2-C-methyl-D-erythritol kinase, found in Clostridium perfringens (strain SM101 / Type A).